A 460-amino-acid polypeptide reads, in one-letter code: Endoglucanase 2 (460 aa).

The N-terminal stretch at 1 to 32 (MIKGSSLKRIKSLVMMAIFSVSIITTAIVSSA) is a signal peptide. E99 (proton donor) is an active-site residue. D155 (nucleophile) is an active-site residue. One can recognise a Dockerin domain in the interval 400–460 (QQGLKGDVNN…FAQLKVKLLN (61 aa)).

Belongs to the glycosyl hydrolase 8 (cellulase D) family.

The enzyme catalyses Endohydrolysis of (1-&gt;4)-beta-D-glucosidic linkages in cellulose, lichenin and cereal beta-D-glucans.. This is Endoglucanase 2 (celB) from Ruminiclostridium josui (Clostridium josui).